A 348-amino-acid polypeptide reads, in one-letter code: Glycerol-1-phosphate dehydrogenase [NAD(P)+] (348 aa).

NAD(+)-binding positions include Gly-94 to Asp-98 and Thr-116 to Ser-119. Asp-121 is a binding site for substrate. Ser-125 provides a ligand contact to NAD(+). Position 168 (Asp-168) interacts with substrate. Zn(2+)-binding residues include Asp-168 and His-248. His-252 serves as a coordination point for substrate. His-264 is a binding site for Zn(2+).

Belongs to the glycerol-1-phosphate dehydrogenase family. As to quaternary structure, homooctamer. Zn(2+) serves as cofactor.

It localises to the cytoplasm. The enzyme catalyses sn-glycerol 1-phosphate + NAD(+) = dihydroxyacetone phosphate + NADH + H(+). It carries out the reaction sn-glycerol 1-phosphate + NADP(+) = dihydroxyacetone phosphate + NADPH + H(+). It participates in membrane lipid metabolism; glycerophospholipid metabolism. In terms of biological role, catalyzes the NAD(P)H-dependent reduction of dihydroxyacetonephosphate (DHAP or glycerone phosphate) to glycerol 1-phosphate (G1P). The G1P thus generated is used as the glycerophosphate backbone of phospholipids in the cellular membranes of Archaea. The chain is Glycerol-1-phosphate dehydrogenase [NAD(P)+] from Methanobrevibacter smithii (strain ATCC 35061 / DSM 861 / OCM 144 / PS).